The sequence spans 762 residues: 5-methyltetrahydropteroyltriglutamate--homocysteine methyltransferase (762 aa).

5-methyltetrahydropteroyltri-L-glutamate-binding positions include R18–K21 and K112. Residues I435–S437 and E488 each bind L-homocysteine. L-methionine contacts are provided by residues I435–S437 and E488. Residues R519 to C520 and W565 contribute to the 5-methyltetrahydropteroyltri-L-glutamate site. D603 is a binding site for L-homocysteine. D603 lines the L-methionine pocket. E609 contributes to the 5-methyltetrahydropteroyltri-L-glutamate binding site. Zn(2+)-binding residues include H645, C647, and E669. H698 functions as the Proton donor in the catalytic mechanism. C730 is a binding site for Zn(2+).

Belongs to the vitamin-B12 independent methionine synthase family. Zn(2+) serves as cofactor.

It catalyses the reaction 5-methyltetrahydropteroyltri-L-glutamate + L-homocysteine = tetrahydropteroyltri-L-glutamate + L-methionine. The protein operates within amino-acid biosynthesis; L-methionine biosynthesis via de novo pathway; L-methionine from L-homocysteine (MetE route): step 1/1. Its function is as follows. Catalyzes the transfer of a methyl group from 5-methyltetrahydrofolate to homocysteine resulting in methionine formation. The protein is 5-methyltetrahydropteroyltriglutamate--homocysteine methyltransferase of Bacillus licheniformis (strain ATCC 14580 / DSM 13 / JCM 2505 / CCUG 7422 / NBRC 12200 / NCIMB 9375 / NCTC 10341 / NRRL NRS-1264 / Gibson 46).